The primary structure comprises 607 residues: Elongation factor 4 (607 aa).

The tr-type G domain occupies 11–193 (ENIRNFSIIA…KIVEVVPAPD (183 aa)). GTP-binding positions include 23 to 28 (DHGKST) and 140 to 143 (NKID).

This sequence belongs to the TRAFAC class translation factor GTPase superfamily. Classic translation factor GTPase family. LepA subfamily.

The protein localises to the cell membrane. The catalysed reaction is GTP + H2O = GDP + phosphate + H(+). Functionally, required for accurate and efficient protein synthesis under certain stress conditions. May act as a fidelity factor of the translation reaction, by catalyzing a one-codon backward translocation of tRNAs on improperly translocated ribosomes. Back-translocation proceeds from a post-translocation (POST) complex to a pre-translocation (PRE) complex, thus giving elongation factor G a second chance to translocate the tRNAs correctly. Binds to ribosomes in a GTP-dependent manner. The sequence is that of Elongation factor 4 from Staphylococcus aureus (strain N315).